The sequence spans 290 residues: MALWIAALLGVIQGIFMFLPVSSTAHMVLTEHWLIARGETLPPPESAEMILFALVVHVGTLVSIAVVFWPSLWRFSLNALGGAWEWAGRGGRGGLPLYWRLFWLGMFSVLCTGVLGLTLKATFEHVFASPLMIAGTLTLTGILLWWTDRLAPRRRGLKGINLKVAGVIGLAQGFALMPGLSRSAMTIVFALFTGLKRRWAAEYSFFLAIPTICAATLLQAIEVYRLGLPNTVGFSALAVGFVVAAIVGIISLKLVIYFLYRARLKVFSFYVWALALGIATGLIDLAPALG.

The next 8 membrane-spanning stretches (helical) occupy residues 1-21 (MALW…FLPV), 49-69 (MILF…VVFW), 101-121 (LFWL…TLKA), 126-146 (VFAS…LLWW), 160-180 (INLK…MPGL), 203-223 (YSFF…AIEV), 232-252 (VGFS…IISL), and 266-286 (VFSF…IDLA).

This sequence belongs to the UppP family.

Its subcellular location is the cell inner membrane. The catalysed reaction is di-trans,octa-cis-undecaprenyl diphosphate + H2O = di-trans,octa-cis-undecaprenyl phosphate + phosphate + H(+). Functionally, catalyzes the dephosphorylation of undecaprenyl diphosphate (UPP). Confers resistance to bacitracin. This chain is Undecaprenyl-diphosphatase, found in Alkalilimnicola ehrlichii (strain ATCC BAA-1101 / DSM 17681 / MLHE-1).